The sequence spans 540 residues: BTB/POZ domain-containing protein 6-A (540 aa).

The BTB domain occupies 138 to 208 (ADVHFIVGPP…MYSDEIELAP (71 aa)).

In terms of assembly, interacts with cul3. Interacts (via BTB domain) with zbtb16/plzf. Expressed in the developing central nervous system.

The protein localises to the cytoplasm. The protein resides in the nucleus. Functionally, adapter protein for the cul3 E3 ubiquitin-protein ligase complex. Promotes the export of zbtb16/plzf from the nucleus to the cytoplasm and targets zbtb16/plzf for ubiquitination and degradation. Up-regulates neurog1 expression and antagonizes zbtb16/plzf, to promote neurogenesis. This Danio rerio (Zebrafish) protein is BTB/POZ domain-containing protein 6-A (btbd6a).